A 253-amino-acid polypeptide reads, in one-letter code: uncharacterized protein (253 aa).

This is an uncharacterized protein from Mycobacterium bovis (strain ATCC BAA-935 / AF2122/97).